A 518-amino-acid polypeptide reads, in one-letter code: Serine/threonine-protein kinase UL13 (518 aa).

The interval 1–119 (MDESRRQRPA…QAALTAPPSS (119 aa)) is disordered. A Protein kinase domain is found at 151 to 518 (PGARSFGGSG…TNPCARHALS (368 aa)). Residues 157-165 (GGSGGYGDV) and K176 contribute to the ATP site. The active-site Proton acceptor is D277.

It belongs to the protein kinase superfamily. Ser/Thr protein kinase family. Post-translationally, autophosphorylated.

It localises to the virion tegument. The protein resides in the host nucleus. It catalyses the reaction L-seryl-[protein] + ATP = O-phospho-L-seryl-[protein] + ADP + H(+). It carries out the reaction L-threonyl-[protein] + ATP = O-phospho-L-threonyl-[protein] + ADP + H(+). Functionally, multifunctional serine/threonine kinase that plays a role in several processes including egress of virus particles from the nucleus, modulation of the actin cytoskeleton and regulation of viral and cellular gene expression. Regulates the nuclear localization of viral envelopment factors UL34 and UL31, by phosphorylating the US3 kinase, indicating a role in nuclear egress. Disrupts host nuclear lamins, including LMNA and LMNB1. Phosphorylates the viral Fc receptor composed of glycoproteins E (gE) and I (gI). Phosphorylation of glycoprotein E (gE) by UL13 alters its subcellular localization, from the host early endosome to the plasma membrane. Participates in the transcriptional regulation of cellular and viral mRNAs mainly by phosphorylating the viral transcriptional regulator ICP22. Additional substrates have been identified, including UL41, UL49 or host EF1D. The chain is Serine/threonine-protein kinase UL13 from Homo sapiens (Human).